The chain runs to 167 residues: Small ribosomal subunit protein uS5 (167 aa).

The 64-residue stretch at 12 to 75 (LQEKLITVNR…EKARRNMVTI (64 aa)) folds into the S5 DRBM domain.

The protein belongs to the universal ribosomal protein uS5 family. In terms of assembly, part of the 30S ribosomal subunit. Contacts proteins S4 and S8.

Its function is as follows. With S4 and S12 plays an important role in translational accuracy. Functionally, located at the back of the 30S subunit body where it stabilizes the conformation of the head with respect to the body. The sequence is that of Small ribosomal subunit protein uS5 from Buchnera aphidicola subsp. Schizaphis graminum (strain Sg).